The following is a 177-amino-acid chain: Large ribosomal subunit protein uL6 (177 aa).

This sequence belongs to the universal ribosomal protein uL6 family. In terms of assembly, part of the 50S ribosomal subunit.

Its function is as follows. This protein binds to the 23S rRNA, and is important in its secondary structure. It is located near the subunit interface in the base of the L7/L12 stalk, and near the tRNA binding site of the peptidyltransferase center. The polypeptide is Large ribosomal subunit protein uL6 (Bordetella avium (strain 197N)).